Here is a 603-residue protein sequence, read N- to C-terminus: Leucine-rich repeat-containing protein 40 (603 aa).

The segment at 1–27 (MAAARRARAGDPRAGFRRAAEEQSPAV) is disordered. 20 LRR repeats span residues 83–104 (DLTKLILASNQLRCLSEDVRLL), 106–127 (ALTVLDVHDNQLTSLPSALGQL), 129–150 (NLQKLDVSHNKLKSIPEELLQL), 152–173 (HLKGLLLQHNELSHLPDGFGQL), 175–196 (SLEELDLSNNHLTDIPKSFALL), 198–219 (NLVRLNLACNQLKDLPADISAM), 221–242 (SLRQLDCTKNYLESVPSELASM), 244–265 (SLEQLYLRKNKLRSLPELPSCK), 266–286 (LLKELHAGENQIEILNAENLK), 290–311 (SLSVLELRDNKIKSVPDEITLL), 313–335 (KLERLDLANNDISRLPYTLGNLS), 336–357 (QLKFLALEGNPLRTIRRDLLQK), 401–422 (TLKLLDYSEKQVAVIPDDVFSA), 427–449 (PVTSVNFSKNQLTAIPPRIVELK), 451–473 (SVCDVNFGFNKISSVSLELCTLH), 474–495 (KLTHLDIRNNVLTSLPEEMEAL), 497–518 (RLQVINLSFNRFKVFPSVLYRM), 520–541 (ALETILLSNNQVGSIDPLQLKK), 544–565 (QLGTLDLQNNDLLQVPPELGNC), and 567–588 (TLRTLLLEGNPFRTPRAAILAK).

This Gallus gallus (Chicken) protein is Leucine-rich repeat-containing protein 40 (LRRC40).